The chain runs to 100 residues: UPF0213 protein YhbQ (100 aa).

In terms of domain architecture, GIY-YIG spans 2 to 77 (TPWFLYLIRT…KQLTKRQKER (76 aa)).

The protein belongs to the UPF0213 family.

The protein is UPF0213 protein YhbQ of Escherichia fergusonii (strain ATCC 35469 / DSM 13698 / CCUG 18766 / IAM 14443 / JCM 21226 / LMG 7866 / NBRC 102419 / NCTC 12128 / CDC 0568-73).